The sequence spans 286 residues: Probable protein S-acyltransferase 16 (286 aa).

2 helical membrane-spanning segments follow: residues 11–31 and 45–65; these read PVTV…FTFI and NAAA…IAVF. Residues 97–147 enclose the DHHC domain; it reads RYCQKCSHFKPPRAHHCRVCKRCVLRMDHHCIWINNCVGHTNYKVFFVFVV. The active-site S-palmitoyl cysteine intermediate is the cysteine 127. The next 2 membrane-spanning stretches (helical) occupy residues 141-161 and 182-202; these read VFFV…VLLV and IYVI…VLLG.

Belongs to the DHHC palmitoyltransferase family.

Its subcellular location is the golgi apparatus membrane. It catalyses the reaction L-cysteinyl-[protein] + hexadecanoyl-CoA = S-hexadecanoyl-L-cysteinyl-[protein] + CoA. Functionally, palmitoyl acyltransferase. The protein is Probable protein S-acyltransferase 16 (PAT16) of Arabidopsis thaliana (Mouse-ear cress).